The chain runs to 2303 residues: MACKHGYPDVCPICTAVDATPGFEYLLMADGEWYPTDLLCVDLDDDVFWPSDTSNQSQTMDWTDVPLIRDIVMEPQGNSSSSDKSNSQSSGNEGVIINNFYSNQYQNSIDLSASGGNAGDAPQTNGQLSNILGGAANAFATMAPLLLDQNTEEMENLSDRVASDKAGNSATNTQSTVGRLCGYGKSHHGEHPASCADTATDKVLAAERYYTIDLASWTTSQEAFSHIRIPLPHVLAGEDGGVFGATLRRHYLCKTGWRVQVQCNASQFHAGSLLVFMAPEFYTGKGTKTGTMEPSDPFTMDTEWRSPQGAPTGYRYDSRTGFFATNHQNQWQWTVYPHQILNLRTNTTVDLEVPYVNVAPSSSWTQHANWTLVVAVLSPLQYATGSSPDVQITASLQPVNPVFNGLRHETVIAQSPIPVTVREHKGCFYSTNPDTTVPIYGKTISTPSDYMCGEFSDLLELCKLPTFLGNPNTNNKRYPYFSATNSVPATSMVDYQVALSCSCMANSMLAAVARNFNQYRGSLNFLFVFTGAAMVKGKFLIAYTPPGAGKPTTRDQAMQSTYAIWDLGLNSSFNFTAPFISPTHYRQTSYTSPTITSVDGWVTVWKLTPLTYPSGTPTNSDILTLVSAGDDFTLRMPISPTKWVPQGVDNAEKGKVSNDDASVDFVAEPVKLPENQTRVAFFYDRAVPIGMLRPGQNMETTFNYQENDYRLNCLLLTPLPSFCPDSSSGPQKTKAPVQWRWVRSGGVNGANFPLMTKQDYAFLCFSPFTFYKCDLEVTVSALGMTRVASVLRWAPTGAPADVTDQLIGYTPSLGETRNPHMWLVGAGNSQVSFVVPYNSPLSVLPAAWFNGWSDFGNTKDFGVAPNADFGRLWIQGNTSASVRIRYKKMKVFCPRPTLFFPWPTPTTTKINADNPVPILELENPAALYRIDLFITFTDEFITFDYKVHGRPVLTFRIPGFGLTPAGRMLVCMGEQPAHGPFTSSRSLYHVIFTATCSSFSFSIYKGRYRSWKKPIHDELVDRGYTTFGEFFKAVRGYHADYYRQRLIHDVETNPGPVQSVFQPQGAVLTKSLAPQAGIQNLLLRLLGIDGDCSEVSKAITVVTDLVAAWEKAKTTLVSPEFWSKLILKTTKFIAASVLYLHNPDFTTTVCLSLMTGVDLLTNDSVFDWLKQKLSSFFRTPPPACPNVMQPQGPLREANEGFTFAKNIEWAMKTIQSVVNWLTSWFKQEEDHPQSKLDKLLMEFPDHCRNIMDMRNGRKAYCECTASFKYFDELYNLAVTCKRIPLASLCEKFKNRHDHSVTRPEPVVVVLRGAAGQGKSVTSQIIAQSVSKMAFGRQSVYSMPPDSEYFDGYENQFSVIMDDLGQNPDGEDFTVFCQMVSSTNFLPNMAHLERKGTPFTSSFIVATTNLPKFRPVTVAHYPAVDRRITFDFTVTAGPHCKTPAGMLDVEKAFDEIPGSKPQLACFSADCPLLHKRGVMFTCNRTQTVYNLQQVVKMVNDTITRKTENVKKMNSLVAQSPPDWEHFENILTCLRQNNAALQDQLDELQEAFAQARERSDFLSDWLKVSAIIFAGIASLSAVIKLASKFKESIWPTPVRVELSEGEQAAYAGRARAQKQALQVLDIQGGGKVLAQAGNPVMDFELFCAKNIVAPITFYYPDKAEVTQSCLLLRAHLFVVNRHVAETDWTAFKLKDVRHERHTVALRSVNRSGAKTDLTFIKVTKGPLFKDNVNKFCSNKDDFPARNDTVTGIMNTGLAFVYSGNFLIGNQPVNTTTGACFNHCLHYRAQTRRGWCGSAIICNVNGKKAVYGMHSAGGGGLAAATIITKELIEAAEKSMLALEPQGAIVDIATGSVVHVPRKTKLRRTVAHDVFQPKFEPAVLSRYDPRTDKDVDVVAFSKHTTNMESLPPIFDVVCGEYANRVFTILGKENGLLTVEQAVLGLPGMDPMEKDTSPGLPYTQQGLRRTDLLNFITAKMTPQLDYAHSKLVIGVYDDVVYQSFLKDEIRPIEKIHEAKTRIVDVPPFAHCIWGRQLLGRFASKFQTKPGLELGSAIGTDPDVDWTRYAVELSGFNYVYDVDYSNFDASHSTAMFECLINNFFTEQNGFDRRIAEYLRSLAVSRHAYEDRRVLIRGGLPSGCAATSMLNTIMNNVIIRAALYLTYSNFDFDDIKVLSYGDDLLIGTNYQIDFNLVKERLAPFGYKITPANKTTTFPLTSHLQDVTFLKRRFVRFNSYLFRPQMDAVNLKAMVSYCKPGTLKEKLMSIALLAVHSGPDIYDEIFLPFRNVGIVVPTYSSMLYRWLSLFR.

The segment at 3 to 14 (CKHGYPDVCPIC) is a zinc-finger region. Positions 30 to 46 (DGEWYPTDLLCVDLDDD) are acidic. The interval 60-73 (MDWTDVPLIRDIVM) is theilo. Positions 74-93 (EPQGNSSSSDKSNSQSSGNE) are disordered. Residue glycine 77 is the site of N-myristoyl glycine; by host attachment. Over residues 78 to 92 (NSSSSDKSNSQSSGN) the composition is skewed to low complexity. A disulfide bridge connects residues cysteine 501 and cysteine 503. The tract at residues 1041–1047 (YYRQRLI) is host EIF4E binding. Residues 1283–1448 (IPLASLCEKF…CKTPAGMLDV (166 aa)) form the SF3 helicase domain. 1312–1319 (GAAGQGKS) is a binding site for ATP. Tyrosine 1608 bears the O-(5'-phospho-RNA)-tyrosine mark. The Peptidase C3 domain maps to 1636–1829 (NPVMDFELFC…AATIITKELI (194 aa)). Residues histidine 1680, aspartate 1714, and cysteine 1793 each act as for protease 3C activity in the active site. In terms of domain architecture, RdRp catalytic spans 2071–2189 (NYVYDVDYSN…GTNYQIDFNL (119 aa)). Catalysis depends on for RdRp activity residues aspartate 2077 and aspartate 2175.

The protein belongs to the picornaviruses polyprotein family. Interacts with host EIF4E. Interacts with the leader protein. In terms of assembly, interacts with host RAN; the complex L-RAN recruits cellular kinases responsible for the L-induced nucleocytoplasmic trafficking inhibition. The complex L-RAN can further bind to the host exportins XPO1/CRM1 and CSE1L/CAS. Interacts with the protein 2A. Interacts with host RNASEL; this interaction prevents RNASEL activation by its substrate 2'-5' oligoadenylates. In terms of processing, phosphorylated. Post-translationally, specific enzymatic cleavages by the viral protease in vivo yield a variety of precursors and mature proteins. The polyprotein seems to be cotranslationally cleaved at the 2A/2B junction by a ribosomal skip from one codon to the next without formation of a peptide bond. This process would release the P1-2A peptide from the translational complex. During virion maturation, immature virions are rendered infectious following cleavage of VP0 into VP4 and VP2. This maturation seems to be an autocatalytic event triggered by the presence of RNA in the capsid and is followed by a conformational change of the particle. In terms of processing, uridylylated by the polymerase and is covalently linked to the 5'-end of genomic RNA. This uridylylated form acts as a nucleotide-peptide primer for the polymerase. Post-translationally, myristoylation is required during RNA encapsidation and formation of the mature virus particle.

The protein resides in the virion. The protein localises to the host cytoplasm. It is found in the host nucleus. It localises to the host nucleolus. Its subcellular location is the host cytoplasmic vesicle membrane. The catalysed reaction is RNA(n) + a ribonucleoside 5'-triphosphate = RNA(n+1) + diphosphate. The enzyme catalyses ATP + H2O = ADP + phosphate + H(+). It carries out the reaction Selective cleavage of Gln-|-Gly bond in the poliovirus polyprotein. In other picornavirus reactions Glu may be substituted for Gln, and Ser or Thr for Gly.. Forms a complex with host RAN and probably binds to exportins carrying activated MAPK in order to mediate the hyperphosphorylation of host Phe/Gly containing nuclear pore proteins (Nups) resulting in cessation of active nucleocytoplasmic transport. Proteins with NLS signals fail to import, cellular mRNAs fail to export, and some proteins small enough for diffusion are not retained anymore (efflux). The resulting inhibition of cellular protein synthesis serves to ensure maximal viral gene expression and to evade host immune response. The leader protein also inhibits host interferon regulatory factor 3 (IRF3) dimerization, thereby blocking the transcriptional activation of IFN genes. Binds to host RNase L thereby preventing its activation by 2'-5' oligoadenylates in order to counteract the antiviral interferon-inducible OAS/RNase L pathway. Inhibits the integrated stress response (ISR) in the infected cell. Inhibits the host EIF2AK2/PKR by rendering this kinase unable to detect double-stranded RNA. Also impairs host stress granule formation probably by acting on a step downstream of EIF2AK2/PKR activation. In terms of biological role, forms an icosahedral capsid of pseudo T=3 symmetry with capsid proteins VP2 and VP3. Together they form an icosahedral capsid composed of 60 copies of each VP1, VP2, and VP3, with a diameter of approximately 300 Angstroms. VP4 lies on the inner surface of the protein shell formed by VP1, VP2 and VP3. All the three latter proteins contain a beta-sheet structure called beta-barrel jelly roll. VP1 is situated at the 12 fivefold axes, whereas VP2 and VP3 are located at the quasi-sixfold axes. Its function is as follows. Lies on the inner surface of the capsid shell. After binding to the host receptor, the capsid undergoes conformational changes. Capsid protein VP4 is released, capsid protein VP1 N-terminus is externalized, and together, they shape a pore in the host membrane through which the viral genome is translocated into the host cell cytoplasm. After genome has been released, the channel shrinks. Functionally, VP0 precursor is a component of immature procapsids. Involved in host translation shutoff by inhibiting cap-dependent mRNA translation. Nuclear localization is required for this function. The resulting inhibition of cellular protein synthesis serves to ensure maximal viral gene expression and to evade host immune response. Inhibits the phosphorylation of the leader protein. In terms of biological role, affects membrane integrity and causes an increase in membrane permeability. Its function is as follows. Associates with and induces structural rearrangements of intracellular membranes. It displays RNA-binding, nucleotide binding and NTPase activities. Functionally, serves as membrane anchor via its hydrophobic domain. Forms a primer, VPg-pU, which is utilized by the polymerase for the initiation of RNA chains. In terms of biological role, cysteine protease that generates mature viral proteins from the precursor polyprotein. In addition to its proteolytic activity, it binds to viral RNA, and thus influences viral genome replication. RNA and substrate cooperatively bind to the protease. Cleaves host PABP1, this cleavage is important for viral replication. Its function is as follows. Replicates the genomic and antigenomic RNAs by recognizing replications specific signals. Performs VPg uridylylation. The chain is Genome polyprotein from Mus musculus (Mouse).